A 172-amino-acid chain; its full sequence is uncharacterized protein (172 aa).

4 helical membrane passes run Met-46–Pro-66, Leu-76–Phe-96, Trp-104–Ser-124, and Phe-129–Ile-149.

Its subcellular location is the endoplasmic reticulum membrane. This is an uncharacterized protein from Schizosaccharomyces pombe (strain 972 / ATCC 24843) (Fission yeast).